The following is a 466-amino-acid chain: UDP-N-acetylmuramoylalanine--D-glutamate ligase (466 aa).

ATP is bound at residue 115–121 (GTDGKTT).

The protein belongs to the MurCDEF family.

It is found in the cytoplasm. It catalyses the reaction UDP-N-acetyl-alpha-D-muramoyl-L-alanine + D-glutamate + ATP = UDP-N-acetyl-alpha-D-muramoyl-L-alanyl-D-glutamate + ADP + phosphate + H(+). It functions in the pathway cell wall biogenesis; peptidoglycan biosynthesis. Its function is as follows. Cell wall formation. Catalyzes the addition of glutamate to the nucleotide precursor UDP-N-acetylmuramoyl-L-alanine (UMA). This is UDP-N-acetylmuramoylalanine--D-glutamate ligase from Chlorobium phaeobacteroides (strain BS1).